We begin with the raw amino-acid sequence, 65 residues long: Small, acid-soluble spore protein Tlp (65 aa).

This sequence belongs to the Tlp family.

It is found in the spore core. This is Small, acid-soluble spore protein Tlp from Bacillus anthracis (strain A0248).